Reading from the N-terminus, the 486-residue chain is Protein kinase C and casein kinase substrate in neurons protein 2 (486 aa).

The F-BAR domain maps to 11–282; sequence VEVSSDSFWE…SIKAADAVED (272 aa). Residues 25 to 274 are a coiled coil; sequence KRTVKRIDDG…TIYRELEQSI (250 aa). An N6-acetyllysine modification is found at lysine 53. Serine 273 is subject to Phosphoserine. A Phosphoserine; by PKC modification is found at serine 313. Positions 315 to 426 are disordered; that stretch reads REKKKAVDGV…NPFDEDTTSG (112 aa). The span at 327 to 362 shows a compositional bias: polar residues; it reads TGINQTGDQSGQNKPGSNLSVPSNPAQSTQLQSSYN. Residues 362–364 carry the NPF1 motif; the sequence is NPF. Serine 373 carries the post-translational modification Phosphoserine; by IKKB. A compositionally biased stretch (polar residues) spans 384–396; the sequence is NVSSYEKTQTYPT. Serine 399 bears the Phosphoserine mark. Residues 404–416 are compositionally biased toward polar residues; it reads NNPFSSTDANGDS. The NPF2 motif lies at 405–407; that stretch reads NPF. The NPF3 signature appears at 417–419; it reads NPF. One can recognise an SH3 domain in the interval 426–486; the sequence is GTEVRVRALY…YPANYVEAIQ (61 aa). Position 446 is a phosphoserine (serine 446).

This sequence belongs to the PACSIN family. In terms of assembly, homodimer. May form heterooligomers with other PACSINs. Interacts (via NPF motifs) with EHD1 (via EH domain). Interacts (via NPF motifs) with EHD2 (via EH domain); this interaction probably stabilizes the caveolae. Interacts with EHD3. Interacts (via the SH3 domain) with MICALL1. Interacts with RAC1. Interacts (via SH3 domain) with DNM1, SYN1, SYNJ1 and WASL. Interacts (via F-BAR domain) with CAV1; this interaction induces membrane tubulation. Interacts with TRPV4. Forms a complex with EHD4 and MICALL1; the complex controls CDH5 trafficking and coordinates angiogenesis. In terms of processing, phosphorylated by casein kinase 2 (CK2). Phosphorylation by PKC probably decreases the membrane binding and tubulation capacities of PACSIN2, thereby modulating the lifetime of caveolae. Widely expressed (at protein level).

The protein localises to the cytoplasm. Its subcellular location is the cytoskeleton. It is found in the cytoplasmic vesicle membrane. It localises to the cell projection. The protein resides in the ruffle membrane. The protein localises to the early endosome. Its subcellular location is the recycling endosome membrane. It is found in the cell membrane. It localises to the membrane. The protein resides in the caveola. The protein localises to the cell junction. Its subcellular location is the adherens junction. Regulates the morphogenesis and endocytosis of caveolae. Lipid-binding protein that is able to promote the tubulation of the phosphatidic acid-containing membranes it preferentially binds. Plays a role in intracellular vesicle-mediated transport. Involved in the endocytosis of cell-surface receptors like the EGF receptor, contributing to its internalization in the absence of EGF stimulus. Essential for endothelial organization in sprouting angiogenesis, modulates CDH5-based junctions. Facilitates endothelial front-rear polarity during migration by recruiting EHD4 and MICALL1 to asymmetric adherens junctions between leader and follower cells. This chain is Protein kinase C and casein kinase substrate in neurons protein 2 (Pacsin2), found in Mus musculus (Mouse).